Consider the following 378-residue polypeptide: MILTRSVVLGFLGSASLALASPVAELAEGSRLTPRGSACSYSGTSGAAAAIAGKAGCSSITLNNVVVPAGTTLDLTGLASGTKVIFEGTTTFGYKQWAGPLISISGTNIQVSGASGHLIDGQGSRWWDGEGSNSKTNIKPKFFFAHSLKGSSTITGLNIKDSPVQVFSISGSSGLTISGVTIDNKNGDTNSLGHNTDGFDIGDSDSITITGATVYNQDDCLAINSGTNIVFSGGYCSGGHGLSIGSVGGRSNNVVETVHISSTQVVNSQNGVRVKAVSGATGTIKGVTFQDITLSGITSQGITIRQEYTNSGYTGSPTTGVPITGLTLNNVHGTVTSKGTDITIECGSSASCSGWTWTKVAVSGGKADVCKNAPSGTC.

Positions Met-1 to Ala-20 are cleaved as a signal peptide. A disulfide bridge links Cys-39 with Cys-57. PbH1 repeat units follow at residues Ser-172 to Asp-203, Ser-204 to Ser-225, Gly-226 to Ser-246, Val-255 to Ala-276, and Ile-284 to Gln-306. Asp-218 acts as the Proton donor in catalysis. Cysteines 220 and 236 form a disulfide. His-240 is an active-site residue. Cystine bridges form between Cys-346–Cys-352 and Cys-370–Cys-378.

The protein belongs to the glycosyl hydrolase 28 family.

The protein localises to the secreted. The catalysed reaction is (1,4-alpha-D-galacturonosyl)n+m + H2O = (1,4-alpha-D-galacturonosyl)n + (1,4-alpha-D-galacturonosyl)m.. The chain is Polygalacturonase (PEPG1) from Penicillium expansum (Blue mold rot fungus).